The sequence spans 256 residues: Thiazole synthase (256 aa).

Catalysis depends on K95, which acts as the Schiff-base intermediate with DXP. Residues G156, 182-183, and 204-205 each bind 1-deoxy-D-xylulose 5-phosphate; these read AG and NT.

Belongs to the ThiG family. As to quaternary structure, homotetramer. Forms heterodimers with either ThiH or ThiS.

The protein localises to the cytoplasm. It catalyses the reaction [ThiS sulfur-carrier protein]-C-terminal-Gly-aminoethanethioate + 2-iminoacetate + 1-deoxy-D-xylulose 5-phosphate = [ThiS sulfur-carrier protein]-C-terminal Gly-Gly + 2-[(2R,5Z)-2-carboxy-4-methylthiazol-5(2H)-ylidene]ethyl phosphate + 2 H2O + H(+). It participates in cofactor biosynthesis; thiamine diphosphate biosynthesis. Its function is as follows. Catalyzes the rearrangement of 1-deoxy-D-xylulose 5-phosphate (DXP) to produce the thiazole phosphate moiety of thiamine. Sulfur is provided by the thiocarboxylate moiety of the carrier protein ThiS. In vitro, sulfur can be provided by H(2)S. This Escherichia coli O45:K1 (strain S88 / ExPEC) protein is Thiazole synthase.